Consider the following 118-residue polypeptide: Nitrogenase-stabilizing/protective protein NifW (118 aa).

The protein belongs to the NifW family. Homotrimer; associates with NifD.

In terms of biological role, may protect the nitrogenase Fe-Mo protein from oxidative damage. This chain is Nitrogenase-stabilizing/protective protein NifW, found in Rhodopseudomonas palustris (strain BisB5).